The following is a 92-amino-acid chain: Small ribosomal subunit protein bS20 (92 aa).

The segment at M1–H20 is disordered.

This sequence belongs to the bacterial ribosomal protein bS20 family.

In terms of biological role, binds directly to 16S ribosomal RNA. This Methylococcus capsulatus (strain ATCC 33009 / NCIMB 11132 / Bath) protein is Small ribosomal subunit protein bS20.